The primary structure comprises 1203 residues: Serine/threonine-protein kinase Nek1 (1203 aa).

The 255-residue stretch at 4–258 (YVRLQKIGEG…VNSILEKGFI (255 aa)) folds into the Protein kinase domain. Residues 10-18 (IGEGSFGKA) and Lys33 each bind ATP. Asp128 serves as the catalytic Proton acceptor. Thr156 carries the phosphothreonine modification. Thr162 carries the post-translational modification Phosphothreonine; by autocatalysis. Residues 329-357 (LLEKKPPPKHKQAHQIPVKKMNSGEERKK) form a disordered region. A phosphoserine mark is found at Ser417 and Ser437. A Phosphothreonine modification is found at Thr615. Ser618 bears the Phosphoserine mark. Disordered stretches follow at residues 643–662 (LTDTQEEEMEKSNSAISSKR) and 674–708 (AQEDEKEKQHHSGSCETVGHKDEREYETENAISSD). Residues 674–683 (AQEDEKEKQH) are compositionally biased toward basic and acidic residues. Phosphoserine is present on residues Ser750, Ser786, Ser820, and Ser832. Disordered regions lie at residues 814-866 (PSAT…LPPV) and 888-925 (AVQQSEVCEDRIPGNVDQSCKDQRDPAVDDSPQSGCDV). The span at 839–850 (NVEEPDDLETEV) shows a compositional bias: acidic residues. At Ser997 the chain carries Phosphoserine. Disordered stretches follow at residues 1021-1045 (SLEIDELEDEPIKEGPSDSEDTVFE) and 1063-1120 (REQP…ETTS). Residue Ser1071 is modified to Phosphoserine.

This sequence belongs to the protein kinase superfamily. NEK Ser/Thr protein kinase family. NIMA subfamily. Binds to CBY2. Found in a complex with CFAP410, NEK1 and SPATA7. Interacts with CFAP410. Interacts (via Ser-997 phosphorylated form) with 14-3-3 proteins. Mg(2+) serves as cofactor. In terms of tissue distribution, predominantly in testes (germ cells and Sertoli cells). Lower levels in ovary (oocytes and granulosa cells), thymus and lung.

Its subcellular location is the nucleus. It localises to the cytoplasm. The protein localises to the cytoskeleton. The protein resides in the microtubule organizing center. It is found in the centrosome. It catalyses the reaction L-seryl-[protein] + ATP = O-phospho-L-seryl-[protein] + ADP + H(+). The catalysed reaction is L-threonyl-[protein] + ATP = O-phospho-L-threonyl-[protein] + ADP + H(+). Phosphorylates serines and threonines, but also appears to possess tyrosine kinase activity. Involved in DNA damage checkpoint control and for proper DNA damage repair. In response to injury that includes DNA damage, NEK1 phosphorylates VDAC1 to limit mitochondrial cell death. May be implicated in the control of meiosis. Involved in cilium assembly. This is Serine/threonine-protein kinase Nek1 (Nek1) from Mus musculus (Mouse).